Consider the following 242-residue polypeptide: Prosalusin (242 aa).

The first 26 residues, 1–26, serve as a signal peptide directing secretion; sequence MAAATRSCRPWGSLLGLIWLVSAAAA. A propeptide spanning residues 27 to 189 is cleaved from the precursor; that stretch reads SWDLSSLRCN…SSWVVYGTNY (163 aa). 93–100 lines the ATP pocket; it reads GWTGTGKS. N-linked (GlcNAc...) asparagine glycosylation is present at N149.

This sequence belongs to the ClpA/ClpB family. Torsin subfamily.

The protein localises to the secreted. Functionally, salusin may be a endocrine and/or paracrine factor able to increase intracellular calcium concentrations and induce cell mitogenesis. Salusin may also be a potent hypotensive peptide. The chain is Prosalusin (TOR2A) from Bos taurus (Bovine).